A 362-amino-acid chain; its full sequence is 5'-tyrosyl-DNA phosphodiesterase (362 aa).

Acidic residues predominate over residues 1–10; that stretch reads MSNSDDEIQE. The disordered stretch occupies residues 1-43; the sequence is MSNSDDEIQEIEAKRQKMSQEDSEVEIEILDEPEQGKLKNSSM. The segment covering 11–20 has biased composition (basic and acidic residues); it reads IEAKRQKMSQ. Acidic residues predominate over residues 21-33; it reads EDSEVEIEILDEP. Positions 126 to 130 are interaction with 5' end of substrate DNA; the sequence is NIDGL. Positions 128 and 158 each coordinate Mg(2+). Residues 232–237 are interaction with 5' end of substrate DNA; the sequence is HLESTR. D271 serves as the catalytic Proton donor/acceptor. The interval 273–275 is interaction with 5' end of substrate DNA; it reads NLR.

It belongs to the CCR4/nocturin family. TTRAP/TDP2 subfamily. Interacts with mxl-1; the interaction promotes axon regeneration after injury. Interacts with ets-4; the interaction is required for the sumoylation of ets-4. Mg(2+) is required as a cofactor. Requires Mn(2+) as cofactor.

The protein resides in the nucleus. It localises to the PML body. Its function is as follows. DNA repair enzyme that can remove a variety of covalent adducts from DNA through hydrolysis of a 5'-phosphodiester bond, giving rise to DNA with a free 5' phosphate. Catalyzes the hydrolysis of dead-end complexes between DNA and the topoisomerase 2 (top2) active site tyrosine residue. Hydrolyzes 5'-phosphoglycolates on protruding 5' ends on DNA double-strand breaks (DSBs) due to DNA damage by radiation and free radicals. Inhibits axon regeneration after neuronal injury by promoting the sumoylation of ets-4, thereby inhibiting the phosphorylation of ets-4 required for probable interaction with cebp-1 and activation of svh-2 expression. The polypeptide is 5'-tyrosyl-DNA phosphodiesterase (Caenorhabditis elegans).